A 161-amino-acid polypeptide reads, in one-letter code: Allophycocyanin subunit alpha 1 (161 aa).

Asn-71 is subject to N4-methylasparagine. Cys-81 is a binding site for (2R,3E)-phycocyanobilin.

The protein belongs to the phycobiliprotein family. As to quaternary structure, heterohexamer of two alpha chains, one alpha-B chain and three beta chains. Contains one covalently linked phycocyanobilin chromophore. The chromophore is added by phycocyanobilin lyase CpcS 1.

The protein localises to the cellular thylakoid membrane. Functionally, light-harvesting photosynthetic bile pigment-protein from the phycobiliprotein complex. Allophycocyanin has a maximum absorption at approximately 650 to 653 nanometers. This Nostoc sp. (strain PCC 7120 / SAG 25.82 / UTEX 2576) protein is Allophycocyanin subunit alpha 1 (apcA1).